Consider the following 908-residue polypeptide: Putative cell signaling protein HAM1 (908 aa).

Disordered stretches follow at residues 1–24 (MSVA…SAVS) and 177–359 (TKAA…EHRQ). 5 stretches are compositionally biased toward basic and acidic residues: residues 179 to 192 (AADK…KLDS), 231 to 247 (HPRD…DKGK), 261 to 283 (AKSD…KETG), 306 to 321 (EQKE…KRDA), and 338 to 359 (NQEK…EHRQ). Residues 255 to 282 (YNQAQEAKSDAQSKAQDLKSSARDYKET) are a coiled coil.

Post-translationally, palmitoylated.

In terms of biological role, may act as a negative regulator of mating during vegetative growth. The polypeptide is Putative cell signaling protein HAM1 (Cryptococcus neoformans var. grubii serotype A (strain H99 / ATCC 208821 / CBS 10515 / FGSC 9487) (Filobasidiella neoformans var. grubii)).